We begin with the raw amino-acid sequence, 274 residues long: Orotidine 5'-phosphate decarboxylase (274 aa).

Catalysis depends on lysine 95, which acts as the Proton donor.

Belongs to the OMP decarboxylase family. Type 2 subfamily.

It carries out the reaction orotidine 5'-phosphate + H(+) = UMP + CO2. It functions in the pathway pyrimidine metabolism; UMP biosynthesis via de novo pathway; UMP from orotate: step 2/2. The protein is Orotidine 5'-phosphate decarboxylase of Mycobacterium avium (strain 104).